Consider the following 312-residue polypeptide: uncharacterized protein (312 aa).

It belongs to the asfivirus CP312R family.

It localises to the virion. This is an uncharacterized protein from African swine fever virus (isolate Tick/Malawi/Lil 20-1/1983) (ASFV).